The primary structure comprises 99 residues: MVEPKIRPLGERVLVKLIEEQEVRKGGIIIPDTAKEKPQEATVIAVGPGKLDENGKRIPIEVKKGDKVLISKYGGTEVKIDGESFQILREDDILAIIEG.

Belongs to the GroES chaperonin family. In terms of assembly, heptamer of 7 subunits arranged in a ring. Interacts with the chaperonin GroEL.

It localises to the cytoplasm. Together with the chaperonin GroEL, plays an essential role in assisting protein folding. The GroEL-GroES system forms a nano-cage that allows encapsulation of the non-native substrate proteins and provides a physical environment optimized to promote and accelerate protein folding. GroES binds to the apical surface of the GroEL ring, thereby capping the opening of the GroEL channel. This chain is Co-chaperonin GroES, found in Methylacidiphilum infernorum (isolate V4) (Methylokorus infernorum (strain V4)).